Reading from the N-terminus, the 372-residue chain is Tetraacyldisaccharide 4'-kinase (372 aa).

ATP is bound at residue 60 to 67; that stretch reads TVGGSGKT.

This sequence belongs to the LpxK family.

The catalysed reaction is a lipid A disaccharide + ATP = a lipid IVA + ADP + H(+). Its pathway is glycolipid biosynthesis; lipid IV(A) biosynthesis; lipid IV(A) from (3R)-3-hydroxytetradecanoyl-[acyl-carrier-protein] and UDP-N-acetyl-alpha-D-glucosamine: step 6/6. Functionally, transfers the gamma-phosphate of ATP to the 4'-position of a tetraacyldisaccharide 1-phosphate intermediate (termed DS-1-P) to form tetraacyldisaccharide 1,4'-bis-phosphate (lipid IVA). This Psychrobacter cryohalolentis (strain ATCC BAA-1226 / DSM 17306 / VKM B-2378 / K5) protein is Tetraacyldisaccharide 4'-kinase.